Consider the following 320-residue polypeptide: Beta-ketoacyl-[acyl-carrier-protein] synthase III (320 aa).

Catalysis depends on residues C112 and H245. The interval 246–250 (QANIR) is ACP-binding. Residue N275 is part of the active site.

It belongs to the thiolase-like superfamily. FabH family. In terms of assembly, homodimer.

Its subcellular location is the cytoplasm. The catalysed reaction is malonyl-[ACP] + acetyl-CoA + H(+) = 3-oxobutanoyl-[ACP] + CO2 + CoA. The protein operates within lipid metabolism; fatty acid biosynthesis. Functionally, catalyzes the condensation reaction of fatty acid synthesis by the addition to an acyl acceptor of two carbons from malonyl-ACP. Catalyzes the first condensation reaction which initiates fatty acid synthesis and may therefore play a role in governing the total rate of fatty acid production. Possesses both acetoacetyl-ACP synthase and acetyl transacylase activities. Its substrate specificity determines the biosynthesis of branched-chain and/or straight-chain of fatty acids. The sequence is that of Beta-ketoacyl-[acyl-carrier-protein] synthase III from Streptococcus thermophilus (strain ATCC BAA-250 / LMG 18311).